The primary structure comprises 130 residues: Annexin A1 (130 aa).

Q19 is covalently cross-linked (Isoglutamyl lysine isopeptide (Gln-Lys) (interchain with K-?)). S24 carries the phosphoserine; by PKC modification. Annexin repeat units lie at residues 37-108 and 109-130; these read FDPS…ALLK and TPAQ…TDRR. Positions 54, 55, 57, 92, 95, 100, 122, 124, 126, 127, and 130 each coordinate Ca(2+).

The protein belongs to the annexin family.

Its subcellular location is the nucleus. The protein localises to the cytoplasm. The protein resides in the cell projection. It localises to the cilium. It is found in the basolateral cell membrane. Its subcellular location is the lateral cell membrane. The protein localises to the cell membrane. The protein resides in the apical cell membrane. It localises to the membrane. It is found in the early endosome. Its subcellular location is the cytoplasmic vesicle membrane. The protein localises to the endosome membrane. The protein resides in the secreted. It localises to the extracellular space. It is found in the extracellular exosome. Its subcellular location is the cytoplasmic vesicle. The protein localises to the secretory vesicle lumen. The protein resides in the phagocytic cup. In terms of biological role, plays important roles in the innate immune response as effector of glucocorticoid-mediated responses and regulator of the inflammatory process. Has anti-inflammatory activity. Plays a role in glucocorticoid-mediated down-regulation of the early phase of the inflammatory response. Promotes resolution of inflammation and wound healing. Functions at least in part by activating the formyl peptide receptors and downstream signaling cascades. Promotes chemotaxis of granulocytes and monocytes via activation of the formyl peptide receptors. Contributes to the adaptive immune response by enhancing signaling cascades that are triggered by T-cell activation, regulates differentiation and proliferation of activated T-cells. Promotes the differentiation of T-cells into Th1 cells and negatively regulates differentiation into Th2 cells. Has no effect on unstimulated T-cells. Promotes rearrangement of the actin cytoskeleton, cell polarization and cell migration. Negatively regulates hormone exocytosis via activation of the formyl peptide receptors and reorganization of the actin cytoskeleton. Has high affinity for Ca(2+) and can bind up to eight Ca(2+) ions. Displays Ca(2+)-dependent binding to phospholipid membranes. Plays a role in the formation of phagocytic cups and phagosomes. Plays a role in phagocytosis by mediating the Ca(2+)-dependent interaction between phagosomes and the actin cytoskeleton. The polypeptide is Annexin A1 (ANXA1) (Gallus gallus (Chicken)).